Reading from the N-terminus, the 382-residue chain is 2-epi-valiolone synthase (382 aa).

Residues 92 to 95 (EKSK), 124 to 128 (GVVVD), 148 to 149 (TT), K161, K170, and 188 to 191 (HLRT) each bind NAD(+). Positions 203, 266, and 283 each coordinate Zn(2+).

Belongs to the sugar phosphate cyclases superfamily. EVS family. Requires NAD(+) as cofactor. Co(2+) serves as cofactor. It depends on Zn(2+) as a cofactor.

The enzyme catalyses D-sedoheptulose 7-phosphate = 2-epi-valiolone + phosphate. Catalyzes the conversion of sedoheptulose 7-phosphate to 2-epi-valiolone, which may serve as an alternative precursor for aminocyclitol biosynthesis. This chain is 2-epi-valiolone synthase, found in Actinosynnema mirum (strain ATCC 29888 / DSM 43827 / JCM 3225 / NBRC 14064 / NCIMB 13271 / NRRL B-12336 / IMRU 3971 / 101).